The chain runs to 73 residues: Mu-sparatoxin-Hv2 (73 aa).

Residues 1–20 (MKFAIVITLLLVAFSAVALA) form the signal peptide. The propeptide occupies 21 to 35 (DKSIERAVMDLITAR). 3 disulfide bridges follow: Cys39/Cys53, Cys46/Cys58, and Cys52/Cys68. Phenylalanine amide is present on Phe72.

This sequence belongs to the neurotoxin 10 (Hwtx-1) family. Expressed by the venom gland.

It localises to the secreted. Insecticidal toxin that potently and irreversibly blocks voltage-gated sodium channels (Nav) in cockroach dorsal unpaired median (DUM) neurons (IC(50)=833.7 nM). It does not change both the steady-state activation and inactivation curves, suggesting it acts as a pore blocker (possibly at Nav site 1). Does not show toxicity when intraperitoneally injected into mouse. In Heteropoda venatoria (Brown huntsman spider), this protein is Mu-sparatoxin-Hv2.